A 305-amino-acid chain; its full sequence is uncharacterized protein (305 aa).

Belongs to the ADP-ribosylglycohydrolase family.

This is an uncharacterized protein from Archaeoglobus fulgidus (strain ATCC 49558 / DSM 4304 / JCM 9628 / NBRC 100126 / VC-16).